Here is a 134-residue protein sequence, read N- to C-terminus: Small ribosomal subunit protein uS8 (134 aa).

The protein belongs to the universal ribosomal protein uS8 family. Part of the 30S ribosomal subunit. Contacts proteins S5 and S12.

Its function is as follows. One of the primary rRNA binding proteins, it binds directly to 16S rRNA central domain where it helps coordinate assembly of the platform of the 30S subunit. This Petrotoga mobilis (strain DSM 10674 / SJ95) protein is Small ribosomal subunit protein uS8.